The sequence spans 169 residues: GTP-dependent dephospho-CoA kinase (169 aa).

Asp45, Asp64, Lys66, and Glu121 together coordinate GTP.

The protein belongs to the GTP-dependent DPCK family.

It catalyses the reaction 3'-dephospho-CoA + GTP = GDP + CoA + H(+). It functions in the pathway cofactor biosynthesis; coenzyme A biosynthesis. Its function is as follows. Catalyzes the GTP-dependent phosphorylation of the 3'-hydroxyl group of dephosphocoenzyme A to form coenzyme A (CoA). This Methanosphaera stadtmanae (strain ATCC 43021 / DSM 3091 / JCM 11832 / MCB-3) protein is GTP-dependent dephospho-CoA kinase.